The sequence spans 251 residues: ATP synthase delta chain, chloroplastic (251 aa).

Residues 1-64 (MASLQHTTAS…STGGALGARM (64 aa)) constitute a chloroplast transit peptide.

It belongs to the ATPase delta chain family. F-type ATPases have 2 components, CF(1) - the catalytic core - and CF(0) - the membrane proton channel. CF(1) has five subunits: alpha(3), beta(3), gamma(1), delta(1), epsilon(1). CF(0) has three main subunits: a, b and c.

Its subcellular location is the plastid. It is found in the chloroplast thylakoid membrane. Its function is as follows. This protein seems to be part of the stalk that links CF(0) to CF(1). It either transmits conformational changes from CF(0) into CF(1) or is implicated in proton conduction. In Pisum sativum (Garden pea), this protein is ATP synthase delta chain, chloroplastic (ATPD).